The chain runs to 946 residues: DNA primase (946 aa).

Positions 596 to 626 are disordered; the sequence is RDTEEDEDGKEDKNNVPDNGVFQKTTSSVDT. The span at 617-626 shows a compositional bias: polar residues; it reads FQKTTSSVDT. Residues 881-920 form a CHC2-type zinc finger; it reads CLNYTHRNPQETVQVFIDLRTEHSYALWASLWSRCFTKKC.

This sequence belongs to the herpesviridae DNA primase family. Associates with the helicase and the primase-associated factor to form the helicase-primase factor.

Its subcellular location is the host nucleus. Its function is as follows. Essential component of the helicase/primase complex. Unwinds the DNA at the replication forks and generates single-stranded DNA for both leading and lagging strand synthesis. The primase initiates primer synthesis and thereby produces large amount of short RNA primers on the lagging strand that the polymerase elongates using dNTPs. The sequence is that of DNA primase (UL70) from Human cytomegalovirus (strain AD169) (HHV-5).